Here is a 510-residue protein sequence, read N- to C-terminus: Ribonuclease Y (510 aa).

The chain crosses the membrane as a helical span at residues 4-24 (LLWAVVALLAGLAGGAGIGVY). The 61-residue stretch at 200-260 (TVSTVNLPSE…VRREVARVAL (61 aa)) folds into the KH domain. Residues 326–419 (VLQHSLECAL…VIAADAISGA (94 aa)) form the HD domain.

This sequence belongs to the RNase Y family.

Its subcellular location is the cell membrane. Functionally, endoribonuclease that initiates mRNA decay. The chain is Ribonuclease Y from Chloroflexus aurantiacus (strain ATCC 29366 / DSM 635 / J-10-fl).